A 253-amino-acid chain; its full sequence is Snake venom serine protease homolog HS120 (253 aa).

Residues 1-18 (MVLIRVIANLLILQLSYA) form the signal peptide. The propeptide occupies 19-24 (QKSSEL). In terms of domain architecture, Peptidase S1 spans 25–244 (VIGGDECNIN…YLPWIQSIIA (220 aa)). Cystine bridges form between Cys31-Cys158, Cys49-Cys65, Cys98-Cys251, Cys137-Cys205, Cys169-Cys184, and Cys195-Cys220. 2 N-linked (GlcNAc...) asparagine glycosylation sites follow: Asn116 and Asn165.

It belongs to the peptidase S1 family. Snake venom subfamily. Expressed by the venom gland.

The protein resides in the secreted. Snake venom serine protease homolog that may act in the hemostasis system of the prey. The protein is Snake venom serine protease homolog HS120 of Bothrops jararaca (Jararaca).